A 166-amino-acid chain; its full sequence is Phospholipase A2 inhibitor clone 04 (166 aa).

Positions 1–19 (MRLILLSSLLLLGIFLANG) are cleaved as a signal peptide. Residues 46-161 (LKDAFLTVHR…CDDNRLVVCE (116 aa)) enclose the C-type lectin domain. Cystine bridges form between Cys-83-Cys-160 and Cys-138-Cys-152. An N-linked (GlcNAc...) asparagine glycan is attached at Asn-122.

It belongs to the alpha-type phospholipase A2 inhibitor family. In terms of assembly, homotrimer; non-covalently linked. Expressed by the liver.

It localises to the secreted. This phospholipase A2 inhibitor binds directly phospholipase A2 in the presence or absence of calcium. The sequence is that of Phospholipase A2 inhibitor clone 04 from Bothrops moojeni (Lance-headed viper).